The primary structure comprises 352 residues: Deoxyhypusine synthase-like protein (352 aa).

It belongs to the deoxyhypusine synthase family.

The protein is Deoxyhypusine synthase-like protein of Coxiella burnetii (strain Dugway 5J108-111).